The sequence spans 258 residues: Protein U52 (258 aa).

Belongs to the herpesviridae UL79 family.

The polypeptide is Protein U52 (U52) (Human herpesvirus 6B (strain Z29) (HHV-6 variant B)).